The sequence spans 364 residues: Trans-enoyl reductase traG (364 aa).

An NADP(+)-binding site is contributed by 51 to 54; sequence VDAK. 136 to 143 lines the substrate pocket; it reads LGLFTAGL. NADP(+)-binding positions include 176-179, 199-202, Y217, and 264-265; these read STAT, SKAN, and LE. Substrate is bound at residue 286-290; that stretch reads ALTVF. NADP(+) is bound at residue 355-356; it reads MS.

It belongs to the zinc-containing alcohol dehydrogenase family. In terms of assembly, monomer.

The protein operates within secondary metabolite biosynthesis. Functionally, trans-enoyl reductase; part of the tra gene cluster that produces terrestric acid. The clavatol biosynthesis cluster cla and the terrestric acid cluster tra are both involved in the production of peniphenones and penilactones. The non-reducing PKS claF is responsible for the formation of clavatol from successive condensations of 3 malonyl-CoA units, presumably with a simple acetyl-CoA starter unit, and 2 methylation steps. The esterase claE probably collaborates with claF by catalyzing the hydrolysis of ACP-bound acyl intermediates to free the ACP from stalled intermediates. The clavatol oxidase claD then converts clavatol to hydroxyclavatol. Spontaneous dehydration of hydroxyclavatol leads to the accumulation of the highly active ortho-quinone methide. On the other hand, the PKS-NRPS hybrid traA is involved in the formation of crustosic acid, with the help of traB and traD. The polyketide synthase module (PKS) of traA is responsible for the synthesis of the polyketide backbone via the condensation of an acetyl-CoA starter unit with 3 malonyl-CoA units. The downstream nonribosomal peptide synthetase (NRPS) module then amidates the carboxyl end of the polyketide with L-malic acid. Because traA lacks a designated enoylreductase (ER) domain, the required activity is provided the enoyl reductase traG. Crustosic acid undergoes decarboxylation and isomerization to the terrestric acid, catalyzed by the 2-oxoglutarate-dependent dioxygenase traH. Both acids are further converted to the 2 gamma-butyrolactones (R)-5-methyltetronic acid and (S)-5-carboxylmethyltetronic acid, with involvement of the cytochrome P450 monooxygenase claJ. Spontaneous addition of the methide to these gamma-butyrolactones leads to peniphenone D and penilactone D, which undergo again stereospecific attacking by methide to give penilactones A and B. This Penicillium crustosum (Blue mold fungus) protein is Trans-enoyl reductase traG.